A 456-amino-acid chain; its full sequence is Bifunctional protein GlmU (456 aa).

Residues 1–228 (MPQNTLNIVI…SHLAAGVNNK (228 aa)) are pyrophosphorylase. UDP-N-acetyl-alpha-D-glucosamine contacts are provided by residues 11-14 (LAAG), lysine 25, glutamine 75, 80-81 (GT), 102-104 (YGD), glycine 138, glutamate 153, asparagine 168, and asparagine 226. Residue aspartate 104 participates in Mg(2+) binding. Asparagine 226 is a Mg(2+) binding site. The segment at 229 to 249 (LQLAELERIFQTGQAQELLKA) is linker. The N-acetyltransferase stretch occupies residues 250-456 (GVTLHDPARF…GWVRPEKDKQ (207 aa)). 2 residues coordinate UDP-N-acetyl-alpha-D-glucosamine: arginine 332 and lysine 350. Catalysis depends on histidine 362, which acts as the Proton acceptor. Residues tyrosine 365 and asparagine 376 each coordinate UDP-N-acetyl-alpha-D-glucosamine. Residues alanine 379, 385–386 (NY), serine 404, alanine 422, and arginine 439 contribute to the acetyl-CoA site.

This sequence in the N-terminal section; belongs to the N-acetylglucosamine-1-phosphate uridyltransferase family. It in the C-terminal section; belongs to the transferase hexapeptide repeat family. In terms of assembly, homotrimer. Requires Mg(2+) as cofactor.

It is found in the cytoplasm. It catalyses the reaction alpha-D-glucosamine 1-phosphate + acetyl-CoA = N-acetyl-alpha-D-glucosamine 1-phosphate + CoA + H(+). The catalysed reaction is N-acetyl-alpha-D-glucosamine 1-phosphate + UTP + H(+) = UDP-N-acetyl-alpha-D-glucosamine + diphosphate. Its pathway is nucleotide-sugar biosynthesis; UDP-N-acetyl-alpha-D-glucosamine biosynthesis; N-acetyl-alpha-D-glucosamine 1-phosphate from alpha-D-glucosamine 6-phosphate (route II): step 2/2. It functions in the pathway nucleotide-sugar biosynthesis; UDP-N-acetyl-alpha-D-glucosamine biosynthesis; UDP-N-acetyl-alpha-D-glucosamine from N-acetyl-alpha-D-glucosamine 1-phosphate: step 1/1. It participates in bacterial outer membrane biogenesis; LPS lipid A biosynthesis. Its function is as follows. Catalyzes the last two sequential reactions in the de novo biosynthetic pathway for UDP-N-acetylglucosamine (UDP-GlcNAc). The C-terminal domain catalyzes the transfer of acetyl group from acetyl coenzyme A to glucosamine-1-phosphate (GlcN-1-P) to produce N-acetylglucosamine-1-phosphate (GlcNAc-1-P), which is converted into UDP-GlcNAc by the transfer of uridine 5-monophosphate (from uridine 5-triphosphate), a reaction catalyzed by the N-terminal domain. This Neisseria meningitidis serogroup C (strain 053442) protein is Bifunctional protein GlmU.